Consider the following 200-residue polypeptide: Pyridoxine/pyridoxamine 5'-phosphate oxidase (200 aa).

Residues 49-54, 64-65, Arg70, Lys71, and Gln93 each bind FMN; these read RMLLLK and YT. Substrate is bound at residue Lys54. Substrate contacts are provided by Tyr111, Arg115, and Ser119. Residues 128–129 and Trp173 each bind FMN; that span reads QS. 179–181 is a substrate binding site; it reads RLH. Arg183 provides a ligand contact to FMN.

Belongs to the pyridoxamine 5'-phosphate oxidase family. In terms of assembly, homodimer. Requires FMN as cofactor.

It catalyses the reaction pyridoxamine 5'-phosphate + O2 + H2O = pyridoxal 5'-phosphate + H2O2 + NH4(+). The catalysed reaction is pyridoxine 5'-phosphate + O2 = pyridoxal 5'-phosphate + H2O2. Its pathway is cofactor metabolism; pyridoxal 5'-phosphate salvage; pyridoxal 5'-phosphate from pyridoxamine 5'-phosphate: step 1/1. It functions in the pathway cofactor metabolism; pyridoxal 5'-phosphate salvage; pyridoxal 5'-phosphate from pyridoxine 5'-phosphate: step 1/1. In terms of biological role, catalyzes the oxidation of either pyridoxine 5'-phosphate (PNP) or pyridoxamine 5'-phosphate (PMP) into pyridoxal 5'-phosphate (PLP). The protein is Pyridoxine/pyridoxamine 5'-phosphate oxidase of Gluconobacter oxydans (strain 621H) (Gluconobacter suboxydans).